Consider the following 203-residue polypeptide: Auxin-induced protein 22E (203 aa).

Residues 15–19 (LRLGL) carry the EAR-like (transcriptional repression) motif. The interval 15 to 77 (LRLGLPGSDE…DHNEDSVQPA (63 aa)) is disordered. The segment covering 43 to 52 (SSPELEESRC) has biased composition (basic and acidic residues). Positions 58–67 (SDSSDSTTTS) are enriched in low complexity. One can recognise a PB1 domain in the interval 107 to 199 (GMYLKVSMAG…RIIKGSEAKG (93 aa)).

This sequence belongs to the Aux/IAA family. In terms of assembly, homodimers and heterodimers.

It localises to the nucleus. Functionally, aux/IAA proteins are short-lived transcriptional factors that function as repressors of early auxin response genes at low auxin concentrations. Repression is thought to result from the interaction with auxin response factors (ARFs), proteins that bind to the auxin-responsive promoter element (AuxRE). Formation of heterodimers with ARF proteins may alter their ability to modulate early auxin response genes expression. This Vigna radiata var. radiata (Mung bean) protein is Auxin-induced protein 22E (AUX22E).